A 223-amino-acid chain; its full sequence is Translation initiation factor 6 (223 aa).

Belongs to the eIF-6 family.

Functionally, binds to the 50S ribosomal subunit and prevents its association with the 30S ribosomal subunit to form the 70S initiation complex. This Thermofilum pendens (strain DSM 2475 / Hrk 5) protein is Translation initiation factor 6.